A 196-amino-acid chain; its full sequence is 7-methyl-GTP pyrophosphatase (196 aa).

The active-site Proton acceptor is Asp-72.

The protein belongs to the Maf family. YceF subfamily. A divalent metal cation serves as cofactor.

It localises to the cytoplasm. The enzyme catalyses N(7)-methyl-GTP + H2O = N(7)-methyl-GMP + diphosphate + H(+). Its function is as follows. Nucleoside triphosphate pyrophosphatase that hydrolyzes 7-methyl-GTP (m(7)GTP). May have a dual role in cell division arrest and in preventing the incorporation of modified nucleotides into cellular nucleic acids. The chain is 7-methyl-GTP pyrophosphatase from Neisseria gonorrhoeae (strain ATCC 700825 / FA 1090).